Reading from the N-terminus, the 315-residue chain is tRNA dimethylallyltransferase (315 aa).

An ATP-binding site is contributed by Gly13 to Thr20. Thr15–Thr20 is a binding site for substrate. Interaction with substrate tRNA stretches follow at residues Asp38 to Leu41, Gln162 to Arg166, and Arg245 to Arg250.

This sequence belongs to the IPP transferase family. As to quaternary structure, monomer. Mg(2+) is required as a cofactor.

The catalysed reaction is adenosine(37) in tRNA + dimethylallyl diphosphate = N(6)-dimethylallyladenosine(37) in tRNA + diphosphate. Its function is as follows. Catalyzes the transfer of a dimethylallyl group onto the adenine at position 37 in tRNAs that read codons beginning with uridine, leading to the formation of N6-(dimethylallyl)adenosine (i(6)A). The chain is tRNA dimethylallyltransferase from Methylobacillus flagellatus (strain ATCC 51484 / DSM 6875 / VKM B-1610 / KT).